The primary structure comprises 240 residues: UDP-2,3-diacylglucosamine hydrolase (240 aa).

5 residues coordinate Mn(2+): D7, H9, D40, N78, and H113. 78–79 (NR) contributes to the substrate binding site. Residues D121, S159, K166, and H194 each coordinate substrate. Positions 194 and 196 each coordinate Mn(2+).

This sequence belongs to the LpxH family. Requires Mn(2+) as cofactor.

Its subcellular location is the cell inner membrane. It catalyses the reaction UDP-2-N,3-O-bis[(3R)-3-hydroxytetradecanoyl]-alpha-D-glucosamine + H2O = 2-N,3-O-bis[(3R)-3-hydroxytetradecanoyl]-alpha-D-glucosaminyl 1-phosphate + UMP + 2 H(+). Its pathway is glycolipid biosynthesis; lipid IV(A) biosynthesis; lipid IV(A) from (3R)-3-hydroxytetradecanoyl-[acyl-carrier-protein] and UDP-N-acetyl-alpha-D-glucosamine: step 4/6. Its function is as follows. Hydrolyzes the pyrophosphate bond of UDP-2,3-diacylglucosamine to yield 2,3-diacylglucosamine 1-phosphate (lipid X) and UMP by catalyzing the attack of water at the alpha-P atom. Involved in the biosynthesis of lipid A, a phosphorylated glycolipid that anchors the lipopolysaccharide to the outer membrane of the cell. The protein is UDP-2,3-diacylglucosamine hydrolase of Pseudomonas putida (strain ATCC 700007 / DSM 6899 / JCM 31910 / BCRC 17059 / LMG 24140 / F1).